A 442-amino-acid polypeptide reads, in one-letter code: MSELRIPIEQWQSLSSAEQTQRLARPGRAQAESLREKVAVILSDVRDNGERAVLNYTRQFDNPDATSLRMSDEQVEAAVASLDDKVKRAIDTAYQTIYRFHEAQRPQDLSIETAPGVQCELRYAPLDAVGLYIPGGSATLPSTALMLGVPAQIAGCQRVVMVSPPNKQGELPAALLYAAKRCGVTDILLCGGAQAIGALAYGIESSPAVGKVFGPGNSFVTEAKQQVSQNDSGCAMDLPAGPSELLVIADDSANPAYVAADLLSQAEHGPDSQVILLTPSMTVAENVRQELMAQCAQLSRADIAEQALQASRLLVVADMNEAIAISETYAPEHLSIQTDNARDLLPQLTRAGSVFVGHYTPESGGDYATGTNHVLPTYGYARNYSSLGLVDFYRRYTVQEASHDGLRQLAEAITTLADVEGLDAHKRAVTIRTETKSTESKL.

NAD(+) is bound by residues Y132, Q194, and N217. Substrate-binding residues include S243, Q265, and H268. The Zn(2+) site is built by Q265 and H268. Active-site proton acceptor residues include E332 and H333. Substrate contacts are provided by H333, D366, E420, and H425. Position 366 (D366) interacts with Zn(2+). Position 425 (H425) interacts with Zn(2+).

This sequence belongs to the histidinol dehydrogenase family. The cofactor is Zn(2+).

The catalysed reaction is L-histidinol + 2 NAD(+) + H2O = L-histidine + 2 NADH + 3 H(+). It functions in the pathway amino-acid biosynthesis; L-histidine biosynthesis; L-histidine from 5-phospho-alpha-D-ribose 1-diphosphate: step 9/9. Its function is as follows. Catalyzes the sequential NAD-dependent oxidations of L-histidinol to L-histidinaldehyde and then to L-histidine. The polypeptide is Histidinol dehydrogenase (Idiomarina loihiensis (strain ATCC BAA-735 / DSM 15497 / L2-TR)).